The sequence spans 621 residues: Interferon-induced GTP-binding protein Mx1 (621 aa).

The region spanning 31-304 (DLALPAIAVI…LVHHIEKSLP (274 aa)) is the Dynamin-type G domain. A G1 motif region spans residues 41–48 (GDQSSGKS). 41 to 48 (GDQSSGKS) provides a ligand contact to GTP. The segment at 66–68 (VTR) is G2 motif. The G3 motif stretch occupies residues 142–145 (DLPG). GTP is bound by residues 142–146 (DLPGI) and 211–214 (TKPD). A G4 motif region spans residues 211–214 (TKPD). Residues 243 to 246 (KCRG) form a G5 motif region. Positions 535–621 (LQEMMLHLKS…MKARSYLVEF (87 aa)) constitute a GED domain.

Belongs to the TRAFAC class dynamin-like GTPase superfamily. Dynamin/Fzo/YdjA family.

The protein localises to the cytoplasm. Does not inhibit strain RB-1 of the fish pathogen, infectious hematopoietic necrosis virus (IHNV). In Oncorhynchus mykiss (Rainbow trout), this protein is Interferon-induced GTP-binding protein Mx1 (mx1).